The chain runs to 246 residues: Mitochondrial inner membrane protease ATP23 homolog (246 aa).

An a divalent metal cation-binding site is contributed by His-125. The active site involves Glu-126. Position 129 (His-129) interacts with a divalent metal cation.

Belongs to the peptidase M76 family. Interacts with XRCC6.

The protein is Mitochondrial inner membrane protease ATP23 homolog of Homo sapiens (Human).